Reading from the N-terminus, the 307-residue chain is Thioredoxin-related transmembrane protein 2-B (307 aa).

An N-terminal signal peptide occupies residues 1-19; that stretch reads MALLTPLFAFLYHLPQVYK. The Extracellular portion of the chain corresponds to 20 to 111; that stretch reads WLLKPYYIAS…VILFFRLDIR (92 aa). Residues 112–132 form a helical membrane-spanning segment; sequence LGLLYLTLCIVFLMTCKPPLY. The Thioredoxin domain occupies 132–269; that stretch reads YMGPEYIKYF…LYQKSKKLGK (138 aa). At 133 to 307 the chain is on the cytoplasmic side; that stretch reads MGPEYIKYFS…AMDTESKKDK (175 aa). Residues 268 to 307 are disordered; the sequence is GKTKEKLERPSELVFSTVPEEEEPEAETISAMDTESKKDK. Residues 269 to 278 are compositionally biased toward basic and acidic residues; sequence KTKEKLERPS. The Di-lysine motif motif lies at 304–307; it reads KKDK.

As to quaternary structure, monomer. Homodimer; disulfide-linked. Occurs in both reduced and oxidized monomeric form. Oxidative conditions increase homodimerization.

The protein resides in the endoplasmic reticulum membrane. The protein localises to the mitochondrion membrane. In terms of biological role, endoplasmic reticulum and mitochondria-associated protein that probably functions as a regulator of cellular redox state and thereby regulates protein post-translational modification, protein folding and mitochondrial activity. This chain is Thioredoxin-related transmembrane protein 2-B (tmx2b), found in Danio rerio (Zebrafish).